The sequence spans 244 residues: 3-deoxy-manno-octulosonate cytidylyltransferase (244 aa).

The protein belongs to the KdsB family.

It localises to the cytoplasm. The enzyme catalyses 3-deoxy-alpha-D-manno-oct-2-ulosonate + CTP = CMP-3-deoxy-beta-D-manno-octulosonate + diphosphate. The protein operates within nucleotide-sugar biosynthesis; CMP-3-deoxy-D-manno-octulosonate biosynthesis; CMP-3-deoxy-D-manno-octulosonate from 3-deoxy-D-manno-octulosonate and CTP: step 1/1. Its pathway is bacterial outer membrane biogenesis; lipopolysaccharide biosynthesis. Activates KDO (a required 8-carbon sugar) for incorporation into bacterial lipopolysaccharide in Gram-negative bacteria. The protein is 3-deoxy-manno-octulosonate cytidylyltransferase of Wolinella succinogenes (strain ATCC 29543 / DSM 1740 / CCUG 13145 / JCM 31913 / LMG 7466 / NCTC 11488 / FDC 602W) (Vibrio succinogenes).